Reading from the N-terminus, the 45-residue chain is Iota-conotoxin-like R11.10 (45 aa).

Disulfide bonds link cysteine 5–cysteine 19, cysteine 12–cysteine 22, cysteine 18–cysteine 27, and cysteine 21–cysteine 36. D-leucine is present on leucine 43. Position 45 (arginine 45) is a propeptide, removed by a carboxypeptidase.

The protein belongs to the conotoxin I1 superfamily. As to expression, expressed by the venom duct.

Its subcellular location is the secreted. Iota-conotoxins bind to voltage-gated sodium channels (Nav) and act as agonists by shifting the voltage-dependence of activation to more hyperpolarized levels. Produces general excitatory symptoms. This is Iota-conotoxin-like R11.10 from Conus radiatus (Rayed cone).